Here is a 153-residue protein sequence, read N- to C-terminus: Aspartate carbamoyltransferase regulatory chain (153 aa).

C110, C115, C138, and C141 together coordinate Zn(2+).

The protein belongs to the PyrI family. As to quaternary structure, contains catalytic and regulatory chains. It depends on Zn(2+) as a cofactor.

In terms of biological role, involved in allosteric regulation of aspartate carbamoyltransferase. The chain is Aspartate carbamoyltransferase regulatory chain from Bacteroides fragilis (strain ATCC 25285 / DSM 2151 / CCUG 4856 / JCM 11019 / LMG 10263 / NCTC 9343 / Onslow / VPI 2553 / EN-2).